The primary structure comprises 415 residues: Alditol oxidase (415 aa).

Residues 12-179 (ITYTAKEVHR…TALTLDLEPA (168 aa)) enclose the FAD-binding PCMH-type domain. Pros-8alpha-FAD histidine is present on His46. Residues Ser106, Ser111, Gly114, 118-121 (TGTH), and Val169 each bind FAD. Ser106 serves as a coordination point for xylitol. Xylitol contacts are provided by Glu317, Arg319, and Thr342. Arg319 provides a ligand contact to FAD. His369 is an FAD binding site. Lys372 is a xylitol binding site.

The protein belongs to the oxygen-dependent FAD-linked oxidoreductase family. As to quaternary structure, monomer. It depends on FAD as a cofactor.

The catalysed reaction is an alditol + O2 = an aldose + H2O2. The enzyme catalyses xylitol + O2 = D-xylose + H2O2. It catalyses the reaction D-sorbitol + O2 = D-glucose + H2O2. In terms of biological role, oxidase that performs selective oxidation of the terminal primary hydroxyl group of several alditols, with a reduction of O2 to H2O2. Shows highest activity on xylitol and D-sorbitol, and to a lesser extent, can also use galactitol, D-mannitol, and D-arabitol as substrates in vitro. Is not active on D-glucose, D-xylose, D-galactose, D-mannose, D-fructose, L-sorbose, L-fucose, myoinositol, glycerol, ethyl alcohol, and meso-erythritol. In Streptomyces sp. (strain IKD472 / FERM P-14339), this protein is Alditol oxidase.